Consider the following 140-residue polypeptide: Nucleoside diphosphate kinase (140 aa).

Lys-9, Phe-57, Arg-85, Thr-91, Arg-102, and Asn-112 together coordinate ATP. The active-site Pros-phosphohistidine intermediate is the His-115.

This sequence belongs to the NDK family. In terms of assembly, homotetramer. It depends on Mg(2+) as a cofactor.

It localises to the cytoplasm. It catalyses the reaction a 2'-deoxyribonucleoside 5'-diphosphate + ATP = a 2'-deoxyribonucleoside 5'-triphosphate + ADP. It carries out the reaction a ribonucleoside 5'-diphosphate + ATP = a ribonucleoside 5'-triphosphate + ADP. Major role in the synthesis of nucleoside triphosphates other than ATP. The ATP gamma phosphate is transferred to the NDP beta phosphate via a ping-pong mechanism, using a phosphorylated active-site intermediate. This Chlorobium chlorochromatii (strain CaD3) protein is Nucleoside diphosphate kinase.